A 109-amino-acid chain; its full sequence is Flagellar hook-basal body complex protein FliE (109 aa).

Belongs to the FliE family.

It localises to the bacterial flagellum basal body. This is Flagellar hook-basal body complex protein FliE from Pseudomonas fluorescens (strain Pf0-1).